The following is a 207-amino-acid chain: Small ribosomal subunit protein uS2 (207 aa).

It belongs to the universal ribosomal protein uS2 family.

In Pyrobaculum islandicum (strain DSM 4184 / JCM 9189 / GEO3), this protein is Small ribosomal subunit protein uS2.